A 400-amino-acid chain; its full sequence is Probable vacuolar protease A (400 aa).

Residues Met-1 to Ala-18 form the signal peptide. Residues Lys-19 to Glu-72 constitute a propeptide, activation peptide. Residues Tyr-87 to Ala-397 form the Peptidase A1 domain. The active site involves Asp-105. Cysteines 118 and 123 form a disulfide. N-linked (GlcNAc...) asparagine glycosylation is present at Asn-140. Asp-289 is a catalytic residue. A disulfide bridge connects residues Cys-323 and Cys-356. A glycan (N-linked (GlcNAc...) asparagine) is linked at Asn-340.

The protein belongs to the peptidase A1 family.

Its subcellular location is the vacuole lumen. It localises to the secreted. The enzyme catalyses Hydrolysis of proteins with broad specificity for peptide bonds. Cleaves -Leu-Leu-|-Val-Tyr- bond in a synthetic substrate. Does not act on esters of Tyr or Arg.. In terms of biological role, vacuolar aspartic endopeptidase which is probably also secreted and contributes to virulence. This is Probable vacuolar protease A (PEP2) from Trichophyton verrucosum (strain HKI 0517).